Reading from the N-terminus, the 387-residue chain is Anhydro-N-acetylmuramic acid kinase (387 aa).

An ATP-binding site is contributed by 9 to 16; that stretch reads GTSVDGID.

The protein belongs to the anhydro-N-acetylmuramic acid kinase family.

The catalysed reaction is 1,6-anhydro-N-acetyl-beta-muramate + ATP + H2O = N-acetyl-D-muramate 6-phosphate + ADP + H(+). Its pathway is amino-sugar metabolism; 1,6-anhydro-N-acetylmuramate degradation. It functions in the pathway cell wall biogenesis; peptidoglycan recycling. Catalyzes the specific phosphorylation of 1,6-anhydro-N-acetylmuramic acid (anhMurNAc) with the simultaneous cleavage of the 1,6-anhydro ring, generating MurNAc-6-P. Is required for the utilization of anhMurNAc either imported from the medium or derived from its own cell wall murein, and thus plays a role in cell wall recycling. The chain is Anhydro-N-acetylmuramic acid kinase from Synechocystis sp. (strain ATCC 27184 / PCC 6803 / Kazusa).